We begin with the raw amino-acid sequence, 194 residues long: High mobility group protein B4 (194 aa).

DNA-binding regions (HMG box) lie at residues 9-79 (PKAN…MNYF) and 93-161 (PRRP…SVYR).

Belongs to the HMGB family.

Its subcellular location is the nucleus. It is found in the chromosome. The chain is High mobility group protein B4 (HMGB4) from Bos taurus (Bovine).